Reading from the N-terminus, the 539-residue chain is Cytochrome c oxidase subunit 1 homolog, bacteroid (539 aa).

The next 3 membrane-spanning stretches (helical) occupy residues 4-24, 28-48, and 75-95; these read TVEM…AGLA, LFGA…LVLM, and GVVA…VVAL. Position 117 (His-117) interacts with heme b. 8 helical membrane passes run 118 to 138, 154 to 174, 187 to 207, 214 to 234, 265 to 285, 298 to 318, 330 to 350, and 368 to 388; these read TSAV…FYVV, FVFW…LLGI, VDLW…GTIM, IYVA…LHVV, GHNA…YYFI, LSII…PHHL, LGMV…INGL, and MMVM…MMSI. Residues His-266, His-316, and His-317 each coordinate Cu cation. Heme b contacts are provided by His-404 and His-406. 4 helical membrane-spanning segments follow: residues 405-425, 443-463, 475-495, and 499-519; these read VHSG…YYLV, HFWL…VAGI, QGFL…YYVM, and GGAL…MTIL.

The protein belongs to the heme-copper respiratory oxidase family. It depends on Cu(2+) as a cofactor. Heme b is required as a cofactor.

Its subcellular location is the cell membrane. It carries out the reaction 4 Fe(II)-[cytochrome c] + O2 + 8 H(+)(in) = 4 Fe(III)-[cytochrome c] + 2 H2O + 4 H(+)(out). It participates in energy metabolism; oxidative phosphorylation. Cytochrome c oxidase is the component of the respiratory chain that catalyzes the reduction of oxygen to water. Subunits 1-3 form the functional core of the enzyme complex. Co I is the catalytic subunit of the enzyme. Electrons originating in cytochrome c or a quinol are transferred to the bimetallic center formed by a high-spin heme and copper B. The polypeptide is Cytochrome c oxidase subunit 1 homolog, bacteroid (fixN) (Rhizobium meliloti (strain 1021) (Ensifer meliloti)).